The following is a 140-amino-acid chain: Class I hydrophobin 1 (140 aa).

The N-terminal stretch at 1–18 (MKFAAVVVLAAAAAAVSA) is a signal peptide. Residues 22-60 (AQRMARGLPPKAPIRRHGTPADTEKRSHPSSTGGGQCNT) are disordered. Disulfide bonds link Cys-58–Cys-119, Cys-65–Cys-113, Cys-66–Cys-99, and Cys-120–Cys-133.

Belongs to the fungal hydrophobin family. As to quaternary structure, self-assembles to form functional amyloid fibrils called rodlets. Self-assembly into fibrillar rodlets occurs spontaneously at hydrophobic:hydrophilic interfaces and the rodlets further associate laterally to form amphipathic monolayers.

Its subcellular location is the secreted. The protein localises to the cell wall. In terms of biological role, aerial growth, conidiation, and dispersal of filamentous fungi in the environment rely upon a capability of their secreting small amphipathic proteins called hydrophobins (HPBs) with low sequence identity. Class I can self-assemble into an outermost layer of rodlet bundles on aerial cell surfaces, conferring cellular hydrophobicity that supports fungal growth, development and dispersal; whereas Class II form highly ordered films at water-air interfaces through intermolecular interactions but contribute nothing to the rodlet structure. This Pisolithus tinctorius (Dead man's foot) protein is Class I hydrophobin 1.